We begin with the raw amino-acid sequence, 474 residues long: Aspartyl/glutamyl-tRNA(Asn/Gln) amidotransferase subunit B (474 aa).

Belongs to the GatB/GatE family. GatB subfamily. Heterotrimer of A, B and C subunits.

The enzyme catalyses L-glutamyl-tRNA(Gln) + L-glutamine + ATP + H2O = L-glutaminyl-tRNA(Gln) + L-glutamate + ADP + phosphate + H(+). The catalysed reaction is L-aspartyl-tRNA(Asn) + L-glutamine + ATP + H2O = L-asparaginyl-tRNA(Asn) + L-glutamate + ADP + phosphate + 2 H(+). In terms of biological role, allows the formation of correctly charged Asn-tRNA(Asn) or Gln-tRNA(Gln) through the transamidation of misacylated Asp-tRNA(Asn) or Glu-tRNA(Gln) in organisms which lack either or both of asparaginyl-tRNA or glutaminyl-tRNA synthetases. The reaction takes place in the presence of glutamine and ATP through an activated phospho-Asp-tRNA(Asn) or phospho-Glu-tRNA(Gln). This is Aspartyl/glutamyl-tRNA(Asn/Gln) amidotransferase subunit B from Coprothermobacter proteolyticus (strain ATCC 35245 / DSM 5265 / OCM 4 / BT).